Consider the following 554-residue polypeptide: Glutamine--tRNA ligase (554 aa).

Residues 34 to 44 (PEPNGYLHIGH) carry the 'HIGH' region motif. ATP contacts are provided by residues 35 to 37 (EPN) and 41 to 47 (HIGHAKS). L-glutamine contacts are provided by aspartate 67 and tyrosine 212. ATP contacts are provided by residues threonine 231, 261-262 (RL), and 269-271 (MSK). The short motif at 268 to 272 (VMSKR) is the 'KMSKS' region element. Residues 317–324 (TKQDNTIE) are interaction with tRNA.

This sequence belongs to the class-I aminoacyl-tRNA synthetase family. As to quaternary structure, monomer.

It localises to the cytoplasm. The catalysed reaction is tRNA(Gln) + L-glutamine + ATP = L-glutaminyl-tRNA(Gln) + AMP + diphosphate. In Shigella boydii serotype 18 (strain CDC 3083-94 / BS512), this protein is Glutamine--tRNA ligase.